We begin with the raw amino-acid sequence, 194 residues long: ATP-dependent Clp protease proteolytic subunit (194 aa).

Ser98 acts as the Nucleophile in catalysis. Residue His123 is part of the active site.

This sequence belongs to the peptidase S14 family. Fourteen ClpP subunits assemble into 2 heptameric rings which stack back to back to give a disk-like structure with a central cavity, resembling the structure of eukaryotic proteasomes.

It is found in the cytoplasm. It carries out the reaction Hydrolysis of proteins to small peptides in the presence of ATP and magnesium. alpha-casein is the usual test substrate. In the absence of ATP, only oligopeptides shorter than five residues are hydrolyzed (such as succinyl-Leu-Tyr-|-NHMec, and Leu-Tyr-Leu-|-Tyr-Trp, in which cleavage of the -Tyr-|-Leu- and -Tyr-|-Trp bonds also occurs).. In terms of biological role, cleaves peptides in various proteins in a process that requires ATP hydrolysis. Has a chymotrypsin-like activity. Plays a major role in the degradation of misfolded proteins. This is ATP-dependent Clp protease proteolytic subunit from Clostridium kluyveri (strain NBRC 12016).